The sequence spans 456 residues: Cyclic AMP-responsive element-binding protein 3-like protein 3 (456 aa).

Disordered stretches follow at residues Met1 to Ile20 and Gly47 to Cys120. Residues Met1–Thr317 are Cytoplasmic-facing. Residues Asp71–Gly85 are compositionally biased toward polar residues. Residues Met238 to Leu301 form the bZIP domain. A basic motif region spans residues Lys240 to Arg269. The interval Leu280–Leu301 is leucine-zipper. A Glycyl lysine isopeptide (Lys-Gly) (interchain with G-Cter in ubiquitin) cross-link involves residue Lys289. A helical; Signal-anchor for type II membrane protein transmembrane segment spans residues Cys318–Ala338. At Ser339 to Leu456 the chain is on the lumenal side. Disordered regions lie at residues Arg365–Ser423 and Cys435–Leu456. N-linked (GlcNAc...) asparagine glycosylation is found at Asn408 and Asn415.

This sequence belongs to the bZIP family. ATF subfamily. In terms of assembly, binds DNA as a dimer. May form homodimers. Interacts with ATF6. Interacts with SYNV1/HRD1; this interaction leads to CREB3L3 ubiquitination and proteasomal degradation. Post-translationally, controlled by regulated intramembrane proteolysis (RIP). Following ER stress a fragment containing the cytoplasmic transcription factor domain is released by proteolysis. The cleavage seems to be performed sequentially by site-1 and site-2 proteases (PS1 and PS2). In terms of processing, N-glycosylation is required for optimal proteolytic activation. Ubiquitinated at Lys-289 by SYNV1/HRD1 via 'Lys-27'-linked ubiquitin.

It is found in the endoplasmic reticulum membrane. The protein localises to the nucleus. Functionally, transcription factor that may act during endoplasmic reticulum stress by activating unfolded protein response target genes. Activated in response to cAMP stimulation. In vitro, binds the cAMP response element (CRE). Activates transcription through box-B element and CRE. Seems to function synergistically with ATF6. In acute inflammatory response, may activate expression of acute phase response (APR) genes. May be involved in growth suppression. Regulates FGF21 transcription. Plays a crucial role in the regulation of triglyceride metabolism and is required for the maintenance of normal plasma triglyceride concentrations. The polypeptide is Cyclic AMP-responsive element-binding protein 3-like protein 3 (CREB3L3) (Bos taurus (Bovine)).